Reading from the N-terminus, the 156-residue chain is Small ribosomal subunit protein uS7 (156 aa).

It belongs to the universal ribosomal protein uS7 family. As to quaternary structure, part of the 30S ribosomal subunit. Contacts proteins S9 and S11.

Its function is as follows. One of the primary rRNA binding proteins, it binds directly to 16S rRNA where it nucleates assembly of the head domain of the 30S subunit. Is located at the subunit interface close to the decoding center, probably blocks exit of the E-site tRNA. The chain is Small ribosomal subunit protein uS7 from Nitrosospira multiformis (strain ATCC 25196 / NCIMB 11849 / C 71).